The primary structure comprises 30 residues: Methanobactin mb-OB3b (30 aa).

The propeptide occupies 1–19 (MTVKIAQKKVLPVIGRAAA). A cross-link (2-(3-methylbutanoyl)-5-hydroxyoxazole-4-carbothionic acid (Leu-Cys)) is located at residues 20–21 (LC). Cu(2+) is bound by residues C21 and C27. C24 and C29 are disulfide-bonded. Positions 26–27 (PC) form a cross-link, proline 5-hydroxy-oxazole-4-carbothionic acid (Pro-Cys).

In terms of assembly, monomer. In the absence of copper, may exist as a dimer or an oligomer.

It is found in the secreted. Its subcellular location is the cytoplasm. The enzyme catalyses 2 superoxide + 2 H(+) = H2O2 + O2. Functionally, chalkophore involved in scavenging, uptake and suppression of toxicity of copper. Each apo-methanobactin (apo-mb) complexes 1 Cu(2+) or Cu(1+) ion to form Cu(1+)-mb (Cu-mb) which is then taken up by the cell. Enhances growth rate in the presence of copper and reduces growth lag upon exposition to elevated levels of copper. Cu-mb contributes to the switchover from soluble methane monooxygenase (sMMO) to the membrane-bound particulate MMO (pMMO) by inducing transcription of pMMO subunit A. It also stimulates the enzymatic activity of pMMO. In the absence of copper, binds other metal ions, like Zn(2+), Ag(1+), Au(3+), Co(2+), Cd(2+), Fe(3+), Hg(2+), Mn(2+), Ni(2+), Pb(2+) or U(6+), but not Ba(2+), Ca(2+), La(2+), Mg(2+) or Sr(2+). Uptake is an active process, which may involve TonB-dependent transporters, and as such does not involve porins. Cu-Mb can be taken up by other methanotrophic bacteria but not by E.coli. Has Cu-dependent superoxide dismutase-like activity. Shows reductant-dependent oxidase and hydrogen peroxide reductase activities. Reduces copper-levels in liver in a rat model of Wilson disease. The sequence is that of Methanobactin mb-OB3b from Methylosinus trichosporium.